The sequence spans 288 residues: Probable HTH-type transcriptional regulator STM3175 (288 aa).

Residues 14–113 (RRVCDHIERH…GQSPRRFRQS (100 aa)) enclose the HTH araC/xylS-type domain. 2 consecutive DNA-binding regions (H-T-H motif) follow at residues 31-52 (EALS…TTWS) and 80-103 (VIDI…KTAF). The putative effector binding domain; binds the peptide antibiotic albicidin stretch occupies residues 111 to 288 (RQSPDWLAWH…LLTDIYLPLR (178 aa)).

In terms of assembly, homodimer.

Functionally, probable transcription factor. The polypeptide is Probable HTH-type transcriptional regulator STM3175 (Salmonella typhimurium (strain LT2 / SGSC1412 / ATCC 700720)).